Reading from the N-terminus, the 455-residue chain is Golgi pH regulator (455 aa).

A run of 4 helical transmembrane segments spans residues Ile46–Leu66, Leu79–Val99, Leu111–Phe131, and Val150–Pro170. Residues Asn180 and Asn243 are each glycosylated (N-linked (GlcNAc...) asparagine). 4 helical membrane-spanning segments follow: residues Gly290–Phe310, Ile343–Leu363, Val378–Met398, and Trp425–His445.

This sequence belongs to the Golgi pH regulator (TC 1.A.38) family. As to quaternary structure, homotrimer.

It localises to the golgi apparatus membrane. It catalyses the reaction iodide(out) = iodide(in). It carries out the reaction chloride(in) = chloride(out). The catalysed reaction is bromide(in) = bromide(out). The enzyme catalyses fluoride(in) = fluoride(out). Its function is as follows. Voltage-gated channel that enables the transfer of anions such as iodide, chloride, bromide and fluoride which may function in counter-ion conductance and participates in Golgi acidification. This Salmo salar (Atlantic salmon) protein is Golgi pH regulator.